Consider the following 545-residue polypeptide: CTP synthase (545 aa).

An amidoligase domain region spans residues 1–266 (MATNYIFVTG…DDFVCERFRL (266 aa)). Residue S14 participates in CTP binding. S14 serves as a coordination point for UTP. ATP contacts are provided by residues 15-20 (SLGKGI) and D72. The Mg(2+) site is built by D72 and E140. Residues 147–149 (DIE), 187–192 (KTKPTQ), and K223 contribute to the CTP site. Residues 187-192 (KTKPTQ) and K223 contribute to the UTP site. 239-241 (KDV) lines the ATP pocket. Residues 291 to 542 (TIGMVGKYTE…VKAAYENHKK (252 aa)) enclose the Glutamine amidotransferase type-1 domain. G352 contacts L-glutamine. C379 (nucleophile; for glutamine hydrolysis) is an active-site residue. L-glutamine-binding positions include 380–383 (LGMQ), E403, and R470. Active-site residues include H515 and E517.

It belongs to the CTP synthase family. In terms of assembly, homotetramer.

The catalysed reaction is UTP + L-glutamine + ATP + H2O = CTP + L-glutamate + ADP + phosphate + 2 H(+). It catalyses the reaction L-glutamine + H2O = L-glutamate + NH4(+). It carries out the reaction UTP + NH4(+) + ATP = CTP + ADP + phosphate + 2 H(+). It participates in pyrimidine metabolism; CTP biosynthesis via de novo pathway; CTP from UDP: step 2/2. Allosterically activated by GTP, when glutamine is the substrate; GTP has no effect on the reaction when ammonia is the substrate. The allosteric effector GTP functions by stabilizing the protein conformation that binds the tetrahedral intermediate(s) formed during glutamine hydrolysis. Inhibited by the product CTP, via allosteric rather than competitive inhibition. Functionally, catalyzes the ATP-dependent amination of UTP to CTP with either L-glutamine or ammonia as the source of nitrogen. Regulates intracellular CTP levels through interactions with the four ribonucleotide triphosphates. This Haemophilus influenzae (strain PittGG) protein is CTP synthase.